We begin with the raw amino-acid sequence, 390 residues long: Transposase for insertion sequence element IS256 in transposon Tn4001 (390 aa).

This sequence belongs to the transposase mutator family.

Functionally, required for the transposition of the insertion element. The sequence is that of Transposase for insertion sequence element IS256 in transposon Tn4001 from Enterococcus faecalis (strain ATCC 700802 / V583).